Consider the following 739-residue polypeptide: MSSENKEQHDLSPRDLPEEAFGFPSELPLETQRRSGTDLRQSETGHGRRAFRRIHMELREKPDTDIKQFVIRELQKSCQCSAAKVRDGAFDFFPVLRWLPKYDLKKNILGDVMSGLIVGILLVPQSIAYSLLAGQEPIYGLYTSFFASIIYFLFGTSRHISVGIFGILCLMIGEVVDRELHKACPDTDATSSSIAVFSSGCVVVNHTLDGLCDKSCYAIKIGSTVTFMAGVYQVAMGFFQVGFVSVYLSDALLSGFVTGASFTILTSQAKYLLGLSLPRSHGVGSVITTWIHIFRNIRNTNICDLITSLLCLLVLVPSKELNEHFKDKLKAPIPVELIVVVAATLASHFGKLNGNYNSSIAGHIPTGFMPPKAPDWSLIPNVAVDAIAISIIGFAITVSLSEMFAKKHGYTVKANQEMYAIGFCNIIPSFFHCITTSAALAKTLVKESTGCQTQLSAIVTALVLLLVLLVIAPLFYSLQKCVLGVITIVNLRGALLKFRDLPKMWRLSRMDTVIWFVTMLSSALLSTEIGLLVGVCFSMFCVILRTQKPKNSLLGLEEESETFESISTYKNLRSKSGIKVFRFIAPLYYINKECFKSALYKKALNPVLVKAAWKKAAKRKLKEEMVTFRGDPDEVSMQLSHDPLEVHTIVIDCSAIQFLDTAGIHTLKEVRRDYEAVGIQVLLAQCNPSVRDSLARGEYCKKEEETLLFYSLSEAVAFAEDSQNQKGVCVVNGLSLSGD.

Basic and acidic residues-rich tracts occupy residues 1 to 17 (MSSENKEQHDLSPRDLP) and 31 to 46 (TQRRSGTDLRQSETGH). Residues 1–47 (MSSENKEQHDLSPRDLPEEAFGFPSELPLETQRRSGTDLRQSETGHG) form a disordered region. Ser-12 bears the Phosphoserine mark. 2 helical membrane passes run 112–132 (VMSGLIVGILLVPQSIAYSLL) and 137–157 (PIYGLYTSFFASIIYFLFGTS). Asn-205 carries N-linked (GlcNAc...) asparagine glycosylation. A run of 2 helical transmembrane segments spans residues 227–247 (FMAGVYQVAMGFFQVGFVSVY) and 255–275 (GFVTGASFTILTSQAKYLLGL). The N-linked (GlcNAc...) asparagine glycan is linked to Asn-357. 4 consecutive transmembrane segments (helical) span residues 378–398 (LIPNVAVDAIAISIIGFAITV), 420–440 (AIGFCNIIPSFFHCITTSAAL), 455–475 (LSAIVTALVLLLVLLVIAPLF), and 524–544 (LLSTEIGLLVGVCFSMFCVIL). Positions 568–719 (TYKNLRSKSG…YSLSEAVAFA (152 aa)) constitute an STAS domain.

The protein belongs to the SLC26A/SulP transporter (TC 2.A.53) family. N-glycosylated. Distributed mainly in the thymus, testis and osteoblastic cells. Highly expressed in the bone, cartilage, kidney and colon.

The protein localises to the cell membrane. Its subcellular location is the apical cell membrane. It carries out the reaction oxalate(in) + sulfate(out) = oxalate(out) + sulfate(in). It catalyses the reaction sulfate(out) + 2 chloride(in) = sulfate(in) + 2 chloride(out). The enzyme catalyses oxalate(out) + 2 chloride(in) = oxalate(in) + 2 chloride(out). The catalysed reaction is bromide(in) + chloride(out) = bromide(out) + chloride(in). It carries out the reaction nitrate(in) + chloride(out) = nitrate(out) + chloride(in). It catalyses the reaction iodide(in) + chloride(out) = iodide(out) + chloride(in). In terms of biological role, sulfate transporter which mediates sulfate uptake into chondrocytes in order to maintain adequate sulfation of proteoglycans which is needed for cartilage development. Mediates electroneutral anion exchange of sulfate ions for oxalate ions, sulfate and oxalate ions for chloride and/or hydroxyl ions and chloride ions for bromide, iodide and nitrate ions. The coupling of sulfate transport to both hydroxyl and chloride ions likely serves to ensure transport at both acidic pH when most sulfate uptake is mediated by sulfate-hydroxide exchange and alkaline pH when most sulfate uptake is mediated by sulfate-chloride exchange. Essential for chondrocyte proliferation, differentiation and cell size expansion. The chain is Sulfate transporter (Slc26a2) from Mus musculus (Mouse).